The primary structure comprises 566 residues: MSGVGGESVHLRRSSTTATTTGSSKSSLNISKSVSPTGNKAVSPMSSPNSLQSGATPTIAQLQSLLKQQQQPNHSITTNNNNNKSVSVEIDDLKSQLQHSNINDTFNEDEEIEEVTDEVIINHDYHSSEDEYEDDEDEDENNNSVNNNSNNNSNNNNNNNTSISSAHSCESIAEEEELTASPILSRQYSYTIGHGTKPDVVLSIGGGFHSSPRSNRSESTIVHEDDLTNQNDKVINAKDKISSDYKRMMEDPEAFRNEKLKQRKSKFFTKKDLEEIPFNPSSGTQLRSTLFQQFMNEKIQMISENPEKYKSELMKFYKQNLKPQVPKSPQSSGSLSTHSDKLKTSSSLQRSRSVSQPPVVTGNSKNAIGSLDTILEKERKRDGNQDRQLPILFTKCVDFLSNDEALKTEGLFRVAGNSSEVEDLMKSILLYGSDIPSNCCYHVVSNMLKKFLRQLSTPVFTFKYHNDFIQTMKLNNDEERIKAIKEILKLIPPVNQLLIKELMKFLVKVTSFSNVNMMHAHNLGLMFGPNMLKAPSDSEMNAISMLDAGNQVITLLIENYNLFYDN.

4 disordered regions span residues 1–56, 65–84, 128–168, and 322–366; these read MSGV…SGAT, LLKQQQQPNHSITTNNNNNK, SEDE…SAHS, and KPQV…NSKN. The segment covering 14–35 has biased composition (low complexity); the sequence is SSTTATTTGSSKSSLNISKSVS. Residues 36 to 56 show a composition bias toward polar residues; the sequence is PTGNKAVSPMSSPNSLQSGAT. A compositionally biased stretch (low complexity) spans 65 to 83; it reads LLKQQQQPNHSITTNNNNN. Over residues 130 to 141 the composition is skewed to acidic residues; that stretch reads DEYEDDEDEDEN. Residues 142 to 160 are compositionally biased toward low complexity; sequence NNSVNNNSNNNSNNNNNNN. Residues 327–337 are compositionally biased toward polar residues; that stretch reads KSPQSSGSLST. Residues 345–356 show a composition bias toward low complexity; that stretch reads SSSLQRSRSVSQ. Residues 369–564 form the Rho-GAP domain; the sequence is GSLDTILEKE…LLIENYNLFY (196 aa).

It is found in the cytoplasm. Its function is as follows. Rho GTPase-activating protein involved in the signal transduction pathway. The protein is Rho GTPase-activating protein gacH (gacH) of Dictyostelium discoideum (Social amoeba).